The primary structure comprises 1296 residues: Clustered mitochondria protein homolog (1296 aa).

Residues Met-1 to Glu-31 form a disordered region. Basic and acidic residues predominate over residues Gly-8 to Gly-26. Residues Arg-333–Leu-575 enclose the Clu domain. Residues Leu-662 to Val-689 adopt a coiled-coil conformation. TPR repeat units lie at residues Ala-970–Val-1003, Cys-1012–Ile-1045, Ala-1096–Tyr-1129, and Ala-1138–Gln-1171. A coiled-coil region spans residues Gln-1242–Glu-1274. Residues Ala-1261–Asp-1296 form a disordered region. Over residues Lys-1263 to Glu-1276 the composition is skewed to basic and acidic residues. The span at Ser-1278–Asp-1296 shows a compositional bias: polar residues.

The protein belongs to the CLU family.

The protein localises to the cytoplasm. It is found in the cytoplasmic granule. In terms of biological role, mRNA-binding protein involved in proper cytoplasmic distribution of mitochondria. Specifically binds mRNAs of nuclear-encoded mitochondrial proteins in the cytoplasm and regulates transport or translation of these transcripts close to mitochondria, playing a role in mitochondrial biogenesis. This Xenopus tropicalis (Western clawed frog) protein is Clustered mitochondria protein homolog.